Reading from the N-terminus, the 849-residue chain is DNA mismatch repair protein MutS (849 aa).

602 to 609 serves as a coordination point for ATP; the sequence is GPNMSGKS.

This sequence belongs to the DNA mismatch repair MutS family.

In terms of biological role, this protein is involved in the repair of mismatches in DNA. It is possible that it carries out the mismatch recognition step. This protein has a weak ATPase activity. This is DNA mismatch repair protein MutS from Streptococcus mutans serotype c (strain ATCC 700610 / UA159).